Reading from the N-terminus, the 473-residue chain is Photosystem II CP43 reaction center protein (473 aa).

The propeptide occupies 1–14; sequence MKTLYSLRRFYHVE. Thr-15 carries the post-translational modification N-acetylthreonine. Thr-15 carries the post-translational modification Phosphothreonine. A run of 5 helical transmembrane segments spans residues 69–93, 134–155, 178–200, 255–275, and 291–312; these read LFEV…PHLA, LIGP…KDKN, KACY…RIIT, KPWA…LSYS, and WFNN…ASQA. [CaMn4O5] cluster is bound at residue Glu-367. Residues 447–471 form a helical membrane-spanning segment; it reads RARAAAAGFEKGIERETEPVLFMKP.

Belongs to the PsbB/PsbC family. PsbC subfamily. In terms of assembly, PSII is composed of 1 copy each of membrane proteins PsbA, PsbB, PsbC, PsbD, PsbE, PsbF, PsbH, PsbI, PsbJ, PsbK, PsbL, PsbM, PsbT, PsbX, PsbY, PsbZ, Psb30/Ycf12, at least 3 peripheral proteins of the oxygen-evolving complex and a large number of cofactors. It forms dimeric complexes. The cofactor is Binds multiple chlorophylls and provides some of the ligands for the Ca-4Mn-5O cluster of the oxygen-evolving complex. It may also provide a ligand for a Cl- that is required for oxygen evolution. PSII binds additional chlorophylls, carotenoids and specific lipids..

Its subcellular location is the plastid. The protein resides in the chloroplast thylakoid membrane. One of the components of the core complex of photosystem II (PSII). It binds chlorophyll and helps catalyze the primary light-induced photochemical processes of PSII. PSII is a light-driven water:plastoquinone oxidoreductase, using light energy to abstract electrons from H(2)O, generating O(2) and a proton gradient subsequently used for ATP formation. In Mesostigma viride (Green alga), this protein is Photosystem II CP43 reaction center protein.